Here is a 137-residue protein sequence, read N- to C-terminus: Pro-corazonin (137 aa).

An N-terminal signal peptide occupies residues 1-20 (MKHVFSTSLIVSLFVIFTDA). Gln-21 bears the Pyrrolidone carboxylic acid mark. Position 31 is an asparagine amide (Asn-31). Positions 68-137 (FLKSPCDVRL…RLLNDGMHRL (70 aa)) are excised as a propeptide.

Belongs to the corazonin family.

The protein resides in the secreted. Its function is as follows. Cardioactive peptide. Corazonin is probably involved in the physiological regulation of the heart beat. The chain is Pro-corazonin from Aedes aegypti (Yellowfever mosquito).